A 245-amino-acid chain; its full sequence is CMRF35-like molecule 3 (245 aa).

Positions 1-18 (MWQFPALLFLFLPGCCTA) are cleaved as a signal peptide. In terms of domain architecture, Ig-like V-type spans 19 to 124 (QDPVTGPEEV…TDPMFKVNVN (106 aa)). At 19–189 (QDPVTGPEEV…FIWSLLSSIS (171 aa)) the chain is on the extracellular side. A disulfide bridge links Cys-40 with Cys-108. Important for maintaining surface expression and for interaction with FCER1G stretches follow at residues 177–182 (NSLFIW) and 189–198 (SFLLMVFVVV). Residues 190–210 (FLLMVFVVVPLLLSMLSAVLW) traverse the membrane as a helical segment. The Cytoplasmic portion of the chain corresponds to 211–245 (VNRPQRHYGGGEIGLVETHRSDALDGEKHFPGDEK).

It belongs to the CD300 family. Interacts with FCER1G; the interaction may be indirect. Interacts with TLR9. As to expression, highly expressed in bone marrow-derived mast cells and macrophages, peripheral blood monocytes and CD11c+ cells, with weaker expression detected in CD11b cells in bone marrow and peripheral blood. Not detected in B220+ cells in bone marrow or spleen, in Thy-1.2+ or CD3+ cells in peripheral blood, spleen or thymus, or in NK1.1+ cells in spleen (at protein level). Widely expressed in various tissues including heart, liver, spleen, lung, kidney, brain, bone marrow, thymus, axillary lymph node and mesenteric lymph node. Highly expressed in macrophage cell lines J774.1 and RAW 264.7 and in mast cell line MC/9. Weak expression detected in B-lineage cell lines WEHI-231 and A20 and in dendritic cell line DC2.4. Not detected in other myeloid cell lines or T-lineage cell lines.

It localises to the cell membrane. Its subcellular location is the early endosome. The protein resides in the lysosome. In terms of biological role, acts as an activating receptor inducing cytokine production in mast cells. Can act as a positive regulator of TLR9 signaling in macrophages, leading to enhanced production of pro-inflammatory cytokines. The chain is CMRF35-like molecule 3 from Mus musculus (Mouse).